Here is a 226-residue protein sequence, read N- to C-terminus: Probable functional amyloid protease FapD (226 aa).

The signal sequence occupies residues 1 to 18 (MRTLILSLLLLVDLTTQA). The 131-residue stretch at 50 to 180 (QKTDFSCGAA…KGWNGIVFAV (131 aa)) folds into the Peptidase C39 domain. Cys56 is an active-site residue.

The protein belongs to the FapD family.

The protein resides in the periplasm. In terms of biological role, probable protease that might be involved in processing fibril precursors. Upon overexpression of the endogenous six-gene locus (fapA-fapF), cells form large clumps during liquid growth, make large amounts of biofilm and produce amyloid fibrils. The chain is Probable functional amyloid protease FapD from Pseudomonas aeruginosa (strain ATCC 15692 / DSM 22644 / CIP 104116 / JCM 14847 / LMG 12228 / 1C / PRS 101 / PAO1).